A 633-amino-acid polypeptide reads, in one-letter code: Carbon catabolite-derepressing protein kinase (633 aa).

Residues 1–16 (MSSNNNTNTAPANANS) show a composition bias toward low complexity. Residues 1-46 (MSSNNNTNTAPANANSSHHHHHHHHHHHHHGHGGSNSTLNNPKSSL) form a disordered region. Residues 17–32 (SHHHHHHHHHHHHHGH) are compositionally biased toward basic residues. A Protein kinase domain is found at 55 to 306 (YQIVKTLGEG…IHEIMQDDWF (252 aa)). ATP contacts are provided by residues 61-69 (LGEGSFGKV) and lysine 84. Residue aspartate 177 is the Proton acceptor of the active site. Threonine 210 is subject to Phosphothreonine; by autocatalysis. The interval 313 to 392 (YLLPPDLKPH…YMLIKENKSL (80 aa)) is auto-inhibitory domain (AID). Residues 317-345 (PDLKPHPEEENENNDSKKDGSSPDNDEID) are disordered. A compositionally biased stretch (basic and acidic residues) spans 319 to 337 (LKPHPEEENENNDSKKDGS). The 42-residue stretch at 348–389 (LVNILSSTMGYEKDEIYESLESSEDTPAFNEIRDAYMLIKEN) folds into the UBA domain. Residues 409-434 (FLSQSPPTFQQQSKSHQKSQVDHETA) are disordered. Serine 413 carries the phosphoserine modification. Lysine 461 is covalently cross-linked (Glycyl lysine isopeptide (Lys-Gly) (interchain with G-Cter in ubiquitin)). Phosphoserine is present on serine 487. Lysine 549 participates in a covalent cross-link: Glycyl lysine isopeptide (Lys-Gly) (interchain with G-Cter in SUMO). Serine 632 bears the Phosphoserine mark.

The protein belongs to the protein kinase superfamily. CAMK Ser/Thr protein kinase family. SNF1 subfamily. In terms of assembly, component of the AMP-activated protein kinase complex also known as the SNF1 kinase complex (Snf1c), a heterotrimeric complex composed of an alpha subunit (SNF1), a regulatory subunit beta (GAL83 and substoichiometric alternate beta subunits SIP1 and SIP2), and a regulatory subunit gamma (SNF4). Interacts with the transcriptional activator SIP4. Interacts with SAK1. Interacts with CTK1: Interacts with adenylate cyclase CYR1. Phosphorylation at Thr-210 in response to glucose limitation leads to activation of kinase activity. ADP, but not AMP, protects the enzyme from dephosphorylation at Thr-210 by GLC7. In terms of processing, sumoylation by the SUMO (E3) ligase MMS21 leads to inhibition by interaction of SUMO attached to Lys-549 with a SUMO-interacting sequence motif located near the active site of SNF1, and by targeting SNF1 for glucose-induced destruction via the SLX5-SLX8 (SUMO-directed) ubiquitin ligase.

The protein resides in the cytoplasm. It localises to the nucleus. It is found in the nucleus membrane. It catalyses the reaction L-seryl-[protein] + ATP = O-phospho-L-seryl-[protein] + ADP + H(+). The catalysed reaction is L-threonyl-[protein] + ATP = O-phospho-L-threonyl-[protein] + ADP + H(+). With respect to regulation, the kinase activity is positively regulated by SNF4 via sequestration of the SNF1 auto-inhibitory domain (AID). Its function is as follows. Serine/threonine protein kinase essential for release from glucose repression. Catalytic subunit of the AMP-activated protein kinase complex also known as the SNF1 kinase complex (Snf1c), a central regulator of cellular energy homeostasis, which, in response to a fall in intracellular ATP levels, activates energy-producing pathways and inhibits energy-consuming processes. The complex phosphorylates histone H3 to form H3S10ph, which promotes H3K14ac formation, leading to transcriptional activation through TBP recruitment to the promoters. The complex also negatively regulates the HOG1 MAPK pathway in ER stress response including unfolded protein response (UPR). Under nutrient/energy depletion, the complex phosphorylates and activates PAS kinase PSK1 which in turn activates PBS1, leading to the inhibition of the TORC1 signaling pathway. SNF1 also interacts and phosphorylates adenylate cyclase CYR1 and negatively regulates the protein kinase A signaling pathway. Also phosphorylates and regulates the transcriptional activator CAT8. The protein is Carbon catabolite-derepressing protein kinase of Saccharomyces cerevisiae (strain ATCC 204508 / S288c) (Baker's yeast).